Reading from the N-terminus, the 250-residue chain is MTIKNVICDIDGVLMHDNVAVPGAAEFLHGIMDKGLPLVLLTNYPSQTGQDLANRFATAGVDVPDSVFYTSAMATADFLRRQEGKKAYVVGEGALIHELYKAGFTITDVNPDFVIVGETRSYNWDMMHKAAYFVANGARFIATNPDTHGRGFYPACGALCAGIEKISGRKPFYVGKPSPWIIRAALNKMQAHSEETVIVGDNLRTDILAGFQAGLETILVLSGVSSLDDIDSMPFRPSWIYPSVAEIDVI.

Residues D9 and D11 each coordinate Mg(2+). Residue D11 is part of the active site. Substrate-binding positions include D11, 42–43 (TN), and K176. Residue D201 participates in Mg(2+) binding. Position 202–205 (202–205 (NLRT)) interacts with substrate.

It belongs to the HAD-like hydrolase superfamily. NagD family. As to quaternary structure, monomer. Mg(2+) is required as a cofactor. It depends on Mn(2+) as a cofactor. Requires Co(2+) as cofactor. Zn(2+) serves as cofactor.

The enzyme catalyses a ribonucleoside 5'-phosphate + H2O = a ribonucleoside + phosphate. Catalyzes the dephosphorylation of an unusually broad range of substrate including deoxyribo- and ribonucleoside tri-, di-, and monophosphates, as well as polyphosphate and glucose-1-P (Glu1P). This is Ribonucleotide monophosphatase NagD (nagD) from Escherichia coli O157:H7.